Consider the following 518-residue polypeptide: Probable alginate O-acetylase AlgI (518 aa).

A run of 8 helical transmembrane segments spans residues 2–24 (VFSS…YLSG), 39–61 (FYAW…NYWI), 78–100 (WLLL…NFGV), 115–137 (FILT…ISYI), 150–172 (NLID…VLRF), 319–341 (GLWH…WLAI), 354–373 (FNVI…WVIF), and 402–424 (ASLT…FFGL). Residue His-322 is part of the active site. The tract at residues 435 to 456 (SGKSARADGPATEQPGTIKAVP) is disordered. A helical membrane pass occupies residues 493 to 515 (LILLLFVASILKLSAQSFSPFLY).

This sequence belongs to the membrane-bound acyltransferase family.

The protein localises to the cell inner membrane. It participates in glycan biosynthesis; alginate biosynthesis. Its function is as follows. Together with AlgJ and AlgF, forms an inner membrane complex which probably interacts with the alginate polymerization-transport complex and adds acetyl groups at the O-2 and O-3 positions of mannuronate residues. Acetylation of alginate is important for the architecture of biofilms and increases the ability of alginate to act as a defense barrier. In Pseudomonas syringae pv. tomato (strain ATCC BAA-871 / DC3000), this protein is Probable alginate O-acetylase AlgI (algI).